We begin with the raw amino-acid sequence, 288 residues long: Rhox homeobox family member 2 (288 aa).

Positions 16–136 (SPAVDDEKEL…GLEPGNAQQP (121 aa)) are disordered. The segment covering 39–48 (VKEEEEDAQP) has biased composition (acidic residues). A compositionally biased stretch (basic and acidic residues) spans 68-80 (GEEKDGGGEEKDG). The segment at residues 134–193 (QQPNVHAFTPLQLQELERIFQREQFPSEFLRRRLARSMNVTELAVQIWFENRRAKWRRHQ) is a DNA-binding region (homeobox). Positions 186-195 (RAKWRRHQRA) match the Nuclear localization signal motif.

The protein belongs to the paired-like homeobox family. PEPP subfamily. In terms of tissue distribution, testis. Not detected in epididymis nor placenta. In testis, mainly expressed in germ cells, but also detected in somatic cells such as Sertoli cells, Leydig cells and peritubular cells.

Its subcellular location is the nucleus. In terms of biological role, transcription factor maybe involved in reproductive processes. Modulates expression of target genes encoding proteins involved in processes relevant to spermatogenesis. The protein is Rhox homeobox family member 2 of Homo sapiens (Human).